Consider the following 141-residue polypeptide: Protein MGF 100-2L (141 aa).

The protein belongs to the asfivirus MGF 100 family.

Functionally, plays a role in virus cell tropism, and may be required for efficient virus replication in macrophages. The chain is Protein MGF 100-2L from African swine fever virus (isolate Tick/South Africa/Pretoriuskop Pr4/1996) (ASFV).